A 302-amino-acid chain; its full sequence is Ribosomal RNA small subunit methyltransferase H (302 aa).

S-adenosyl-L-methionine-binding positions include 43 to 45 (GGH), Asp62, Phe89, Asp105, and His112. Residues 276–302 (EIANNPRSRSAKLRIAEKQAETGDEDN) are disordered.

Belongs to the methyltransferase superfamily. RsmH family.

The protein localises to the cytoplasm. It catalyses the reaction cytidine(1402) in 16S rRNA + S-adenosyl-L-methionine = N(4)-methylcytidine(1402) in 16S rRNA + S-adenosyl-L-homocysteine + H(+). Its function is as follows. Specifically methylates the N4 position of cytidine in position 1402 (C1402) of 16S rRNA. This is Ribosomal RNA small subunit methyltransferase H from Nostoc sp. (strain PCC 7120 / SAG 25.82 / UTEX 2576).